Reading from the N-terminus, the 98-residue chain is NADH-ubiquinone oxidoreductase chain 4L (98 aa).

3 helical membrane-spanning segments follow: residues 1-21 (MSIT…GMFV), 29-49 (SLLC…IVSL), and 61-81 (VILL…LIMV).

The protein belongs to the complex I subunit 4L family. As to quaternary structure, core subunit of respiratory chain NADH dehydrogenase (Complex I) which is composed of 45 different subunits.

It is found in the mitochondrion inner membrane. The catalysed reaction is a ubiquinone + NADH + 5 H(+)(in) = a ubiquinol + NAD(+) + 4 H(+)(out). In terms of biological role, core subunit of the mitochondrial membrane respiratory chain NADH dehydrogenase (Complex I) which catalyzes electron transfer from NADH through the respiratory chain, using ubiquinone as an electron acceptor. Part of the enzyme membrane arm which is embedded in the lipid bilayer and involved in proton translocation. In Ochotona princeps (Southern American pika), this protein is NADH-ubiquinone oxidoreductase chain 4L (MT-ND4L).